The sequence spans 1211 residues: MLSLAAKLVAFFWRTADTPREEAGQLEPELAEGDTKLKTVRGVVTRYCSDYGMIDDMIYFSSDAVTSRVLLNVGQEVIAVVEENKVSNGLKAIRVEAVSDKWEDDSRNHGSPSDCGPRVLIGCVTSLVEGAGCISQTTYFSLESVCEGFEPCKGDWVEAEYRIRPGTWSSEATSVKPLRYKRVDKVCISSLCGRNGVLEESIFFTLDSLKLPDGYTPRRGDVVNAVVVESSQSCYVWRALCMTLVKRRDAAPVHEATHFYGTILLKNKGDIEVTQVTHFGTLKEGRSKTMVIWIENKGDIPQNLVSCKLAGWDKSKQFRFQMLDKDQMCPVVSFVSVPEKENSSDENINSLNSHTKNKTSQMSESSLVNNRGISPGDCTCKGENGEKDNILSRKQMTEPEPGGLVPPGGKTFIVVICDGKNPGRCKELLLLCFSDFLIGRYLEVNVISGEESLIAAREPFSWKKLKSSQALTSAKTTVVVTAQKRNSRRQLPSFLPQYPIPDRLRKCVEQKIDILTFQPLLAELLNMSNYKEKFSTLLWLEEIYAEMELKEYNMSGIILRRNGDLLVLEVPGLAEGRPSLYAGDKLILKTQEYNGHAIEYISYVTEIHEEDVTLKINPEFEQAYNFEPMDVEFTYNRTTSRRCHFALEHVIHLGVKVLFPEEIILQSPQVTGNWNHAQDTKSSGQSTSKKNRKTMTDQAEHGTEERRVGDKDLPVLAPFTAEMSDWVDEIQTPKARKMEFFNPVLNENQKLAVKRILSGDCRPLPYILFGPPGTGKTVTIIEAVLQVHFALPDSRILVCAPSNSAADLVCLRLHESKVLQPATMVRVNATCRFEEIVIDAVKPYCRDGEDIWKASRFRIIITTCSSSGLFYQIGVRVGHFTHVFVDEAGQASEPECLIPLGLMSDISGQIVLAGDPMQLGPVIKSRLAMAYGLNVSFLERLMSRPAYQRDENAFGACGAHNPLLVTKLVKNYRSHEALLMLPSRLFYHRELEVCADPTVVTSLLGWEKLPKKGFPLIFHGVRGSEAREGKSPSWFNPAEAVQVLRYCCLLAHSISSQVSASDIGVITPYRKQVEKIRILLRNVDLMDIKVGSVEEFQGQEYLVIIISTVRSNEDRFEDDRYFLGFLSNSKRFNVAITRPKALLIVLGNPHVLVRDPCFGALLEYSITNGVYMGCDLPPALQSLQNCGEGVADPSYPVVPESTGPEKHQEPS.

Disordered regions lie at residues 340-385 (KENS…GENG) and 674-710 (WNHA…RVGD). Polar residues-rich tracts occupy residues 345 to 372 (DENI…NNRG) and 674 to 688 (WNHA…QSTS). Basic and acidic residues predominate over residues 694 to 710 (TMTDQAEHGTEERRVGD). 770-777 (GPPGTGKT) provides a ligand contact to ATP. A DEAG box motif is present at residues 886–889 (DEAG). The segment at 1192 to 1211 (DPSYPVVPESTGPEKHQEPS) is disordered.

Belongs to the DNA2/NAM7 helicase family. SDE3 subfamily. Interacts with PIWIL1. Interacts with PIWIL2. Interacts with PIWIL4. Interacts with HSPA2. Interacts with PLD6. Specifically expressed in testis.

The protein localises to the cytoplasm. The catalysed reaction is ATP + H2O = ADP + phosphate + H(+). Its function is as follows. ATP-dependent RNA helicase required during spermatogenesis to repress transposable elements and prevent their mobilization, which is essential for germline integrity. Acts via the piRNA metabolic process, which mediates the repression of transposable elements during meiosis by forming complexes composed of piRNAs and Piwi proteins and governs the methylation and subsequent repression of transposons. Involved in the primary piRNA metabolic process. Specifically binds to piRNA precursors and promotes the generation of intermediate piRNA processing fragments that are subsequently loaded to Piwi proteins. Acts via its ATP-dependent RNA helicase activity: displays 5'-3' RNA unwinding activity and probably mediates unwinding and funneling of single-stranded piRNA precursor transcripts to the endonuclease that catalyzes the first cleavage step of piRNA processing to generate piRNA intermediate fragments that are subsequently loaded to Piwi proteins. This Homo sapiens (Human) protein is RNA helicase Mov10l1.